A 985-amino-acid chain; its full sequence is Eukaryotic translation initiation factor 4E transporter (985 aa).

The disordered stretch occupies residues 1–24 (MDRRSMGETESGDAFLDLKKPPAS). Phosphoserine is present on S5. Residues 30 to 36 (YTKEELL) carry the YXXXXLphi motif motif. Residues S74, S78, S115, S120, S136, and S138 each carry the phosphoserine modification. An interaction with CSDE1 region spans residues 131–161 (VSSRRSGSPLEKDSDGLRLLGGRRIGSGRII). The Nuclear localization signal signature appears at 195–211 (RREFGDSKRVFGERRRN). Positions 208–230 (RRRNDSYTEEEPEWFSAGPTSQS) are disordered. Positions 219–240 (PEWFSAGPTSQSETIELTGFDD) are interaction with DDX6. 4 positions are modified to phosphoserine: S301, S345, S353, and S374. K410 is covalently cross-linked (Glycyl lysine isopeptide (Lys-Gly) (interchain with G-Cter in SUMO2)). S417 is subject to Phosphoserine. The Nuclear export signal signature appears at 438-447 (VEAGLKGLKV). Residues 448–490 (DQQVKNSTPFMAEHLEETLSAVTNNRQLKKDGDMTAFNKLVST) are interaction with LSM14A. At K486 the chain carries N6-acetyllysine. Phosphoserine is present on residues S513, S564, and S587. A Nuclear export signal motif is present at residues 613-638 (ITAQMSQLELQQAALEGLALPHDLAV). Disordered regions lie at residues 664-693 (QQRV…SMLS) and 707-803 (ESKE…PTTP). S693 carries the phosphoserine modification. The tract at residues 695–713 (SFTPTSVIRKMYESKEKSK) is interaction with PATL1. Basic and acidic residues-rich tracts occupy residues 707–717 (ESKEKSKEEPA) and 725–735 (DSKEDTQKASE). The span at 736–746 (ENLLSSSSVPS) shows a compositional bias: low complexity. S752 bears the Phosphoserine mark. Residues 754-776 (TTNSKLSALQRSSCSTPLSQANR) show a composition bias toward polar residues. 2 positions are modified to phosphoserine: S920 and S951. Residues 922–953 (QTTPQNVPSRSGLPHMHSQLEHRPSQRSSSPV) form a disordered region. Residues 940–985 (QLEHRPSQRSSSPVGLAKWFGSDVLQQPLPSMPAKVISVDELEYRQ) are interaction with LSM14A.

The protein belongs to the 4E-T/EIF4E-T family. In terms of assembly, interacts (via YXXXXLphi motif) with EIF4E. Interacts (via YXXXXLphi motif) with EIF4E2. Interacts with DDX6. Interacts with CSDE1/UNR. Interacts with CNOT1; promoting association with the CCR4-NOT complex. Interacts with LSM14A; promoting EIF4ENIF1 localization to P-bodies. Interacts with PATL1. Interacts with importin beta only in the presence of importin alpha, suggesting a direct interaction with importin alpha. Interacts with APOBEC3G in an RNA-dependent manner. Post-translationally, phosphorylation by MAPK8/JNK1 and or MAPK9/JNK2 in response to oxidative stress promotes P-body assembly. Phosphorylated during meiotic maturation. Widely expressed.

It is found in the cytoplasm. The protein localises to the P-body. Its subcellular location is the nucleus. The protein resides in the PML body. It localises to the nucleus speckle. Functionally, EIF4E-binding protein that regulates translation and stability of mRNAs in processing bodies (P-bodies). Plays a key role in P-bodies to coordinate the storage of translationally inactive mRNAs in the cytoplasm and prevent their degradation. Acts as a binding platform for multiple RNA-binding proteins: promotes deadenylation of mRNAs via its interaction with the CCR4-NOT complex, and blocks decapping via interaction with eIF4E (EIF4E and EIF4E2), thereby protecting deadenylated and repressed mRNAs from degradation. Component of a multiprotein complex that sequesters and represses translation of proneurogenic factors during neurogenesis. Promotes miRNA-mediated translational repression. Required for the formation of P-bodies. Involved in mRNA translational repression mediated by the miRNA effector TNRC6B by protecting TNRC6B-targeted mRNAs from decapping and subsequent decay. Also acts as a nucleoplasmic shuttling protein, which mediates the nuclear import of EIF4E and DDX6 by a piggy-back mechanism. The chain is Eukaryotic translation initiation factor 4E transporter from Homo sapiens (Human).